We begin with the raw amino-acid sequence, 446 residues long: Questin oxidase (446 aa).

This sequence belongs to the questin oxidase family.

It carries out the reaction questin + NADPH + O2 = demethylsulochrin + NADP(+). Its pathway is secondary metabolite biosynthesis. Its function is as follows. Questin oxidase; part of the gene cluster that mediates the biosynthesis of geodin, an intermediate in the biosynthesis of other natural products. The pathway begins with the synthesis of atrochrysone thioester by the polyketide synthase (PKS) gedC. The atrochrysone carboxyl ACP thioesterase gedB then breaks the thioester bond and releases the atrochrysone carboxylic acid from gedC. The atrochrysone carboxylic acid is then converted to atrochrysone which is further transformed into emodinanthrone. The next step is performed by the emodinanthrone oxygenase gedH that catalyzes the oxidation of emodinanthrone to emodin. Emodin O-methyltransferase encoded probably by gedA then catalyzes methylation of the 8-hydroxy group of emodin to form questin. Ring cleavage of questin by questin oxidase gedK leads to desmethylsulochrin via several intermediates including questin epoxide. Another methylation step probably catalyzed by methyltransferase gedG leads to the formation of sulochrin which is further converted to dihydrogeodin by the sulochrin halogenase gedL. Finally, the dihydrogeodin oxidase gedJ catalyzes the stereospecific phenol oxidative coupling reaction converting dihydrogeodin to geodin. This Aspergillus terreus (strain NIH 2624 / FGSC A1156) protein is Questin oxidase.